The primary structure comprises 20 residues: Octopamine receptor (20 aa).

It belongs to the G-protein coupled receptor 1 family.

It localises to the cell membrane. Putative receptor for octopamine. Octopamine (OA) is a neurotransmitter, neurohormone, and neuromodulator in invertebrates. The activity of this receptor is mediated by G proteins which activate adenylyl cyclase. In Photinus pyralis (Common eastern firefly), this protein is Octopamine receptor.